The primary structure comprises 66 residues: Beta-defensin 107A (66 aa).

Residues 1–22 (MKIFFFIFAALILLAQIFQART) form the signal peptide. Disulfide bonds link Cys37-Cys51 and Cys41-Cys60.

This sequence belongs to the beta-defensin family.

Its subcellular location is the secreted. Has antibacterial activity. The polypeptide is Beta-defensin 107A (DEFB107A) (Macaca fascicularis (Crab-eating macaque)).